Reading from the N-terminus, the 118-residue chain is Ribosome-binding factor A (118 aa).

Belongs to the RbfA family. Monomer. Binds 30S ribosomal subunits, but not 50S ribosomal subunits or 70S ribosomes.

The protein localises to the cytoplasm. Its function is as follows. One of several proteins that assist in the late maturation steps of the functional core of the 30S ribosomal subunit. Associates with free 30S ribosomal subunits (but not with 30S subunits that are part of 70S ribosomes or polysomes). Required for efficient processing of 16S rRNA. May interact with the 5'-terminal helix region of 16S rRNA. This chain is Ribosome-binding factor A, found in Geobacter sulfurreducens (strain ATCC 51573 / DSM 12127 / PCA).